A 285-amino-acid chain; its full sequence is Probable endonuclease 4 (285 aa).

Zn(2+) contacts are provided by His-69, His-109, Glu-145, Asp-179, His-182, His-216, Asp-229, His-231, and Glu-261.

This sequence belongs to the AP endonuclease 2 family. The cofactor is Zn(2+).

The catalysed reaction is Endonucleolytic cleavage to 5'-phosphooligonucleotide end-products.. In terms of biological role, endonuclease IV plays a role in DNA repair. It cleaves phosphodiester bonds at apurinic or apyrimidinic (AP) sites, generating a 3'-hydroxyl group and a 5'-terminal sugar phosphate. This chain is Probable endonuclease 4, found in Salmonella paratyphi C (strain RKS4594).